The following is an 816-amino-acid chain: Neuroligin-4, X-linked (816 aa).

Positions 1–41 (MSRPQGLLWLPLLFTPVCVMLNSNVLLWLTALAIKFTLIDS) are cleaved as a signal peptide. The Extracellular portion of the chain corresponds to 42–676 (QAQYPVVNTN…TKRDYSTELS (635 aa)). A glycan (N-linked (GlcNAc...) asparagine) is linked at N102. 2 disulfide bridges follow: C110–C146 and C306–C317. The tract at residues 359-364 (QGEFLN) is interaction with NRXN1. The cysteines at positions 476 and 510 are disulfide-linked. N511 is a glycosylation site (N-linked (GlcNAc...) asparagine). The disordered stretch occupies residues 636–659 (TKRPAITPANNPKHSKDPHKTGPE). Basic and acidic residues predominate over residues 649 to 658 (HSKDPHKTGP). Residues 677-697 (VTIAVGASLLFLNILAFAALY) form a helical membrane-spanning segment. The Cytoplasmic segment spans residues 698-816 (YKKDKRRHET…LPHGHSTTRV (119 aa)). The residue at position 712 (S712) is a Phosphoserine.

Belongs to the type-B carboxylesterase/lipase family. In terms of assembly, homodimer. Interacts with NRXN1 in a calcium-dependent manner. Interaction with neurexins is mediated by heparan sulfate glycan modification on neurexin. Interacts through its C-terminus with DLG4/PSD-95 third PDZ domain. In terms of tissue distribution, expressed at highest levels in heart. Expressed at lower levels in liver, skeletal muscle and pancreas and at very low levels in brain.

It is found in the cell membrane. It localises to the postsynaptic density membrane. In terms of biological role, cell surface protein involved in cell-cell-interactions via its interactions with neurexin family members. This Homo sapiens (Human) protein is Neuroligin-4, X-linked (NLGN4X).